The following is a 618-amino-acid chain: UvrABC system protein C (618 aa).

A GIY-YIG domain is found at 19–97 (SEPGIYRMLD…IKALRPKYNV (79 aa)). The 36-residue stretch at 208–243 (QIILDELAERMKNAVSQLNFEEAAVLRDQIKNLRLI) folds into the UVR domain.

This sequence belongs to the UvrC family. In terms of assembly, interacts with UvrB in an incision complex.

The protein localises to the cytoplasm. Its function is as follows. The UvrABC repair system catalyzes the recognition and processing of DNA lesions. UvrC both incises the 5' and 3' sides of the lesion. The N-terminal half is responsible for the 3' incision and the C-terminal half is responsible for the 5' incision. The sequence is that of UvrABC system protein C from Legionella pneumophila (strain Lens).